Here is a 148-residue protein sequence, read N- to C-terminus: Snaclec alboaggregin-D subunit beta (148 aa).

A signal peptide spans 1–23 (MGRFISVSFGLLVVFLSLSGAGA). A disulfide bridge links C27 with C38. The C-type lectin domain occupies 34-145 (YDLYCYKVFK…CNSTYSFVCK (112 aa)). N47 carries N-linked (GlcNAc...) asparagine glycosylation. Disulfide bonds link C55–C144 and C121–C136. N137 carries an N-linked (GlcNAc...) asparagine glycan.

In terms of assembly, tetramer of heterodimers of alpha and beta subunits (alphabeta)(4); disulfide-linked. In terms of tissue distribution, expressed by the venom gland.

It is found in the secreted. Its function is as follows. Snaclec that induces human platelet aggregation in the absence of any cofactor with the EC(50) of 0.25 nM and causes tyrosine phosphorylation in human platelets. Antibodies against either platelet GPIbalpha (GP1BA) or GPVI (GP6) inhibit alboaggregin D-induced platelet aggregation. Only the combination of these two antibodies completely inhibit aggregation, suggesting that it acts through both GPIbalpha (GP1BA) and GPVI (GP6). This is Snaclec alboaggregin-D subunit beta from Trimeresurus albolabris (White-lipped pit viper).